A 736-amino-acid chain; its full sequence is MSEAPQARRVGSVDDHSVYDDAKTYYTSEERHNNSRSGPRQRTYSQNSLLGQMERLGLKEPFRRGSHDESNHNRRFLIQVDPTLESLKSQEDTDGNMQITIEDNGPKVLTLRTAGSNGHNRFDIRGTYMLSNLLQELTLAQEYGRKQVILDEARLNENPVNRLSRLIRDHFWDALTRRIDASSIEVAAKDPKDWTDDPRPRIYVPKGAPEQLEYYKKLAADKPDIRLDVVELPETITPEYVVGINKAPGLLAVDMEETVDPKTGERVMSGRPFVVPGGRFNELYGWDSYMESLGLLVNDKVYLAKSMVLNFCFCIKHYGKILNATRSYYLCRSQPPFLTDMALRVYDKIRHEPDATEFLRTAILAAIKEYHSVWVAEPRLDPVTGLSRYRPEGTGVPPETEADHFLHILEPYYKKHNMTFKEFVEAYNFGRIREPELDKYFLHDRAVRESGHDTSYRLEGVCADLATVDLNTLLFKYETDIARTIRNVFGDKLVIPAEYCVGSLQPGQVETSAIWDRRSKRRKLAIDKYLWNEEAGMYFDYDTAKRQQCNYESCTTFWALWAGVASPKQAAIMVTRALPKFEAYGGLLSGTEESRGQIGLDRPNRQWDYPYGWAPQQMLAWTGLYRYSFTEEAERLAYKWLFMITKAFSDFNGVVVEKYDVTRPVDPHRVDAEYGNQGLGFKGVAKEGFGWVNASYIYGLQIINAHMRRALGTLTPYDTFIKALEDNRNRALSEMV.

Residues 1–47 (MSEAPQARRVGSVDDHSVYDDAKTYYTSEERHNNSRSGPRQRTYSQN) form a disordered region. Basic and acidic residues predominate over residues 11-33 (GSVDDHSVYDDAKTYYTSEERHN). The span at 35-47 (SRSGPRQRTYSQN) shows a compositional bias: polar residues. Ca(2+) contacts are provided by Asp92, Asp94, Asn96, Gln98, and Asp103. Substrate is bound by residues Arg279, 286–287 (WD), Asn323, 332–334 (RSQ), Glu399, Arg448, and Gly451. Active-site proton donor/acceptor residues include Asp453 and Glu657.

It belongs to the glycosyl hydrolase 37 family. Ca(2+) serves as cofactor.

The protein localises to the cytoplasm. The catalysed reaction is alpha,alpha-trehalose + H2O = alpha-D-glucose + beta-D-glucose. It participates in carbohydrate degradation. Its function is as follows. Hydrolyzes intracellular trehalose to glucose. Plays a role in pathogenicity, specifically in proliferation of invasive hyphae in rice blast disease. The chain is Cytosolic neutral trehalase (NTH1) from Pyricularia oryzae (strain 70-15 / ATCC MYA-4617 / FGSC 8958) (Rice blast fungus).